We begin with the raw amino-acid sequence, 360 residues long: G-protein coupled receptor 15 (360 aa).

The Extracellular portion of the chain corresponds to 1-33 (MDPEETSVYLDYYYATSPNPDIRETHSHVPYTS). The chain crosses the membrane as a helical span at residues 34–54 (VFLPVFYIAVFLTGVLGNLVL). The Cytoplasmic portion of the chain corresponds to 55–69 (MGALHFKPGSRRLID). The chain crosses the membrane as a helical span at residues 70-90 (IFIINLAASDFIFLVTLPLWV). Residues 91–120 (DKEASLGLWRTGSFLCKGSSYMISVNMHCS) are Extracellular-facing. Residues 121–141 (VFLLTCMSVDRYLAIVCPVVS) traverse the membrane as a helical segment. The Cytoplasmic portion of the chain corresponds to 142–149 (RKFRRTDC). Residues 150 to 170 (AYVVCASIWFISCLLGLPTLL) form a helical membrane-spanning segment. At 171–192 (SRELTLIDDKPYCAEKKATPLK) the chain is on the extracellular side. Residues 193–213 (LIWSLVALIFTFFVPLLSIVT) traverse the membrane as a helical segment. The Cytoplasmic segment spans residues 214-239 (CYCRIARKLCAHYQQSGKHNKKLKKS). The chain crosses the membrane as a helical span at residues 240 to 260 (IKIIFIVVAAFLVSWLPFNTS). The Extracellular segment spans residues 261-284 (KLLAIVSGLQQERYFPSAILQLGM). Residues 285–305 (EVSGPLAFANSCVNPFIYYIF) traverse the membrane as a helical segment. Residues 306–360 (DSYIRRAIVHCLCPCLKNYDFGSSTETSDSHLTKALSTFIHAEDFTRRRKRSVSL) lie on the Cytoplasmic side of the membrane. Residue Ser359 is modified to Phosphoserine.

Belongs to the G-protein coupled receptor 1 family. In terms of assembly, interacts with adapter YWHAE; this interaction promotes ER-to-Golgi transport of GPR15. Post-translationally, phosphorylation is necessary for YWHAE binding and efficient surface expression. O-glycosylated. Sialylated O-glycans in the N-terminal tail inhibits binding of GPR15LG. In terms of processing, sulfation is required for efficient binding of GPR15LG.

The protein resides in the cell membrane. G protein-coupled receptor that plays an important role in immune homeostasis. Acts via its natural ligand GPR15LG, a chemokine-like polypeptide strongly expressed in gastrointestinal tissues. GPR15-GPR15LG signaling axis regulates intestinal homeostasis and inflammation through the migration of immune cells. Controls thereby the specific homing of T-cells, particularly FOXP3+ regulatory T-cells (Tregs), to the large intestine lamina propria. Also required for skin localization of thymus-derived dendritic epidermal T-cells. Plays an important role in mediating cytoprotective function as well as angiogenesis of thrombomodulin. Mechanistically, preferentially signals through the Gi/o pathway to inhibit adenylate cyclase activity and activate a phosphatidylinositol-calcium second messenger system that regulates the release of Ca(2+) ions from intracellular stores. This is G-protein coupled receptor 15 (GPR15) from Chlorocebus aethiops (Green monkey).